The chain runs to 560 residues: Thermosome subunit alpha (560 aa).

A compositionally biased stretch (basic and acidic residues) spans 535–547 (SEKKGGEGSKEES). The tract at residues 535–560 (SEKKGGEGSKEESGGEGGAGTPSLGD) is disordered.

The protein belongs to the TCP-1 chaperonin family. In terms of assembly, forms a heterooligomeric complex of two stacked nine-membered rings; one of alpha and the other of beta subunits. Sometimes called a 'rosettasome'.

It localises to the cytoplasm. It catalyses the reaction ATP + H2O = ADP + phosphate + H(+). Molecular chaperone; binds unfolded polypeptides in vitro, stimulates protein folding and has ATPase activity. One of the most abundant proteins in the cell at all temperatures. The sequence is that of Thermosome subunit alpha (thsA) from Saccharolobus shibatae (strain ATCC 51178 / DSM 5389 / JCM 8931 / NBRC 15437 / B12) (Sulfolobus shibatae).